Consider the following 67-residue polypeptide: DNA-directed RNA polymerase subunit omega (67 aa).

Belongs to the RNA polymerase subunit omega family. The RNAP catalytic core consists of 2 alpha, 1 beta, 1 beta' and 1 omega subunit. When a sigma factor is associated with the core the holoenzyme is formed, which can initiate transcription.

The enzyme catalyses RNA(n) + a ribonucleoside 5'-triphosphate = RNA(n+1) + diphosphate. Functionally, promotes RNA polymerase assembly. Latches the N- and C-terminal regions of the beta' subunit thereby facilitating its interaction with the beta and alpha subunits. This Ralstonia pickettii (strain 12J) protein is DNA-directed RNA polymerase subunit omega.